The sequence spans 132 residues: Small ribosomal subunit protein uS8 (132 aa).

Belongs to the universal ribosomal protein uS8 family. In terms of assembly, part of the 30S ribosomal subunit. Contacts proteins S5 and S12.

In terms of biological role, one of the primary rRNA binding proteins, it binds directly to 16S rRNA central domain where it helps coordinate assembly of the platform of the 30S subunit. The chain is Small ribosomal subunit protein uS8 from Lactobacillus helveticus (strain DPC 4571).